A 630-amino-acid chain; its full sequence is WD repeat-containing protein 26 homolog (630 aa).

Residues 1–13 show a composition bias toward low complexity; sequence MQSTSSTSSGSCS. Residues 1–90 are disordered; that stretch reads MQSTSSTSSG…NNRENTSCSG (90 aa). Ser36 and Ser40 each carry phosphoserine. Composition is skewed to polar residues over residues 48–57 and 66–75; these read PSGSSAATNG and IVNNNGSSSR. The 33-residue stretch at 96–128 folds into the LisH domain; the sequence is SNQEIIRLIGQYLHDVGLDKSVQTLMLESGCYL. The 62-residue stretch at 129-190 folds into the CTLH domain; that stretch reads EHPSATKFRE…EHLDDGNPLD (62 aa). WD repeat units lie at residues 312 to 351, 359 to 400, 404 to 443, 445 to 482, 485 to 524, 529 to 569, and 572 to 612; these read DHCDEVWFCKFSPDGLKLATGSKDSTVIIWDVDPYKLTLK, QAQL…LVVK, SLEDSLACGAFSRDGARFVCGGQKGQLYLCDLNGTIVDSW, GVRVNSIAFRADNKTILAADNHYRIRGYNFDSPRSDFD, REPHPIMTFSINSADRLALLNVSNQGLHLWDIEDKCLVRR, RQSN…PLAK, and GHTK…SSAT. The tract at residues 604–630 is disordered; that stretch reads PKPNGSSATTESDDCSSSSSSSSWNMT. The span at 609–630 shows a compositional bias: low complexity; the sequence is SSATTESDDCSSSSSSSSWNMT.

The protein resides in the cytoplasm. The protein localises to the mitochondrion. G-beta-like protein involved in cell signal transduction. This Drosophila melanogaster (Fruit fly) protein is WD repeat-containing protein 26 homolog.